Here is a 450-residue protein sequence, read N- to C-terminus: tRNA modification GTPase MnmE (450 aa).

(6S)-5-formyl-5,6,7,8-tetrahydrofolate-binding residues include arginine 20, glutamate 78, and lysine 117. The 162-residue stretch at 211 to 372 (GLRMVIVGKP…LEESIYRETQ (162 aa)) folds into the TrmE-type G domain. Asparagine 221 provides a ligand contact to K(+). GTP-binding positions include 221–226 (NVGKST), 240–246 (TDIPGTT), 265–268 (DTAG), 326–329 (NKVD), and 353–355 (SAL). Residue serine 225 participates in Mg(2+) binding. K(+) contacts are provided by threonine 240, isoleucine 242, and threonine 245. Threonine 246 contacts Mg(2+). Lysine 450 provides a ligand contact to (6S)-5-formyl-5,6,7,8-tetrahydrofolate.

The protein belongs to the TRAFAC class TrmE-Era-EngA-EngB-Septin-like GTPase superfamily. TrmE GTPase family. As to quaternary structure, homodimer. Heterotetramer of two MnmE and two MnmG subunits. Requires K(+) as cofactor.

The protein localises to the cytoplasm. Functionally, exhibits a very high intrinsic GTPase hydrolysis rate. Involved in the addition of a carboxymethylaminomethyl (cmnm) group at the wobble position (U34) of certain tRNAs, forming tRNA-cmnm(5)s(2)U34. This Thermotoga maritima (strain ATCC 43589 / DSM 3109 / JCM 10099 / NBRC 100826 / MSB8) protein is tRNA modification GTPase MnmE.